The sequence spans 489 residues: Serotonin-gated chloride channel mod-1 (489 aa).

The signal sequence occupies residues 1–20; it reads MKFIPEITLLLLLFVHSTQA. The Extracellular segment spans residues 21–240; that stretch reads KGKRRKCPEG…VTFTFKRRYG (220 aa). Residues N44, N103, and N144 are each glycosylated (N-linked (GlcNAc...) asparagine). Serotonin is bound by residues Y180 and W226. 3 helical membrane passes run 241-261, 274-294, and 304-324; these read FYII…WVSF, VGIS…KNLP, and VWML…AFVC. The Cytoplasmic portion of the chain corresponds to 325-458; the sequence is YISRCQNSVR…ARFHPEAVDK (134 aa). The interval 365 to 398 is disordered; it reads GSVISHYHPTSNGNGNNNRHDTPQVTGRGSLHRN. A compositionally biased stretch (polar residues) spans 372 to 391; sequence HPTSNGNGNNNRHDTPQVTG. The helical transmembrane segment at 459 to 479 threads the bilayer; that stretch reads FSIVAFPLAFTMFNLVYWWHY.

The protein belongs to the ligand-gated ion channel (TC 1.A.9) family. Expressed in a subset of muscles, and head and tail neurons, including RME and GABAergic ventral nerve cord neurons. Expressed in AIY, RME, RID, RIF, ASI, DD1-6, and PVN neurons.

It localises to the membrane. Its subcellular location is the cell membrane. Its function is as follows. Functions as a 5-hydroxytryptamine (serotonin) receptor. This receptor is a ligand-gated anion-specific ion channel, selective for chloride ions. Relays a long-range endocrine signal from the body cavity neurons to modulate distal adipose triglyceride lipase atgl-1 function, via the nuclear receptor nhr-76. Together with the G-protein coupled serotonin receptor ser-1 involved in male mating behavior. May mediate an inhibitory effect of serotonin on egg laying. Involved in regulating locomotory behavior, perhaps by modulating interneuronal signaling, acting in concert with G-protein coupled serotonin receptor ser-4. In the presence of food, plays a role in initiating and extending dwelling behavior, perhaps acting in AIY, RIF and ASI neurons, in opposition to neuropeptide PDF-mediated signaling. Plays a role in aversive learning upon exposure to pathogens such as Gram-negative bacterium P.aeruginosa strain PA14; perhaps acting in interneurons in response to serotonin released by the serotonergic ADF neurons. The protein is Serotonin-gated chloride channel mod-1 of Caenorhabditis elegans.